The chain runs to 171 residues: Ly6/PLAUR domain-containing protein 6 (171 aa).

An N-terminal signal peptide occupies residues 1–25 (MEPSPALAWLLLLSLVADCLKAAQS). The UPAR/Ly6 domain occupies 47–141 (FKCFTCEKAA…PRNDTDATFA (95 aa)). 6 disulfide bridges follow: Cys-49–Cys-77, Cys-52–Cys-61, Cys-70–Cys-96, Cys-102–Cys-121, Cys-107–Cys-118, and Cys-122–Cys-127. The NxI motif motif lies at 88-90 (NSI). N-linked (GlcNAc...) asparagine glycosylation is found at Asn-134 and Asn-147. The GPI-anchor amidated asparagine moiety is linked to residue Asn-147. A propeptide spans 148 to 171 (QTNGHPHCVSVIVSCLWVWLGLTL) (removed in mature form).

Interacts with nicotinic acetylcholine receptors (nAChRs) including CHRNA3, CHRNA4, CHRNA5, CHRNA6, CHRNA7, CHRNB2 and CHRNB4. Interacts (via NxI motif) with LRP6. Expressed at high levels in the cortex and cerebellum of the brain, at moderate levels in the lung, kidney, and liver, and at low levels in the heart and prostate (at protein level). Expressed in neurons (at protein level).

The protein resides in the secreted. The protein localises to the cytoplasm. It is found in the cell membrane. It localises to the synapse. Its subcellular location is the synaptosome. The protein resides in the membrane raft. The protein localises to the cell projection. It is found in the dendrite. It localises to the perikaryon. Acts as a modulator of nicotinic acetylcholine receptors (nAChRs) function in the brain. Inhibits nicotine-induced Ca(2+) influx through nAChRs. In vitro, specifically inhibits alpha-3:beta-4 and alpha-7 nAChR currents in an allosteric manner. Acts as a positive regulator of Wnt/beta-catenin signaling. The sequence is that of Ly6/PLAUR domain-containing protein 6 (Lypd6) from Rattus norvegicus (Rat).